The primary structure comprises 404 residues: MHYSEIMVRYGELSTKGKNRMRFINKLKRNIQSVLSIYPQVHVKADRDRTHIYLHGTDYQPVAESLKQIFGIQNFSPSYRVKKSVPALIEAVQTIMKQVYQEGMTFKITSKRSDHSFELDSRELNQTLGDAVFMAIPNVQVKMKAPDIELRVEIREEAAYISYETIRGAGGLPVGTSGKGMLMLSGGIDSPVAGYLALKRGVDIEAVHFASPPYTSPGALKKAQDLTRKLTKFGGNIQFIEVPFTDIQEEIKAKAPEAYLMTLTRRFMMRITDRIREERGAQVIINGESLGQVASQTIESMQAINAVTNTPVIRPVVTMDKLEIIEIAEKIDTFQISIQPFEDCCTIFAPDRPKTNPKIKNAEQYEARLDVEGLVERAVAGIMITEIRPQAETDEVDELIEGLL.

The region spanning 60-165 is the THUMP domain; the sequence is QPVAESLKQI…EEAAYISYET (106 aa). ATP is bound by residues 183 to 184, 208 to 209, Arg-265, Gly-287, and Gln-296; these read ML and HF.

Belongs to the ThiI family.

The protein resides in the cytoplasm. The enzyme catalyses [ThiI sulfur-carrier protein]-S-sulfanyl-L-cysteine + a uridine in tRNA + 2 reduced [2Fe-2S]-[ferredoxin] + ATP + H(+) = [ThiI sulfur-carrier protein]-L-cysteine + a 4-thiouridine in tRNA + 2 oxidized [2Fe-2S]-[ferredoxin] + AMP + diphosphate. It catalyses the reaction [ThiS sulfur-carrier protein]-C-terminal Gly-Gly-AMP + S-sulfanyl-L-cysteinyl-[cysteine desulfurase] + AH2 = [ThiS sulfur-carrier protein]-C-terminal-Gly-aminoethanethioate + L-cysteinyl-[cysteine desulfurase] + A + AMP + 2 H(+). The protein operates within cofactor biosynthesis; thiamine diphosphate biosynthesis. Catalyzes the ATP-dependent transfer of a sulfur to tRNA to produce 4-thiouridine in position 8 of tRNAs, which functions as a near-UV photosensor. Also catalyzes the transfer of sulfur to the sulfur carrier protein ThiS, forming ThiS-thiocarboxylate. This is a step in the synthesis of thiazole, in the thiamine biosynthesis pathway. The sulfur is donated as persulfide by IscS. The protein is Probable tRNA sulfurtransferase of Streptococcus gordonii (strain Challis / ATCC 35105 / BCRC 15272 / CH1 / DL1 / V288).